The sequence spans 317 residues: Melanocyte-stimulating hormone receptor (317 aa).

Over 1-37 the chain is Extracellular; that stretch reads MPVQGSQRRLLGSLNSTPTATPHLGLAANQTGAWCLE. Residue N29 is glycosylated (N-linked (GlcNAc...) asparagine). Residues 38-63 form a helical membrane-spanning segment; sequence VSIPDGLFLSLGLVSLVENVLVVTAI. Topologically, residues 64–72 are cytoplasmic; the sequence is AKNRNLHSP. The chain crosses the membrane as a helical span at residues 73-93; it reads MYCFICCLALSDLLVSGSNML. At 94-118 the chain is on the extracellular side; that stretch reads ETAVTLLLEAGALAARAAVVQQLDN. Residues 119-140 form a helical membrane-spanning segment; that stretch reads VIDVITCSSMLSSLCFLGAIAV. At 141–163 the chain is on the cytoplasmic side; it reads DRYISIFYALRYHSIVTLPRARR. Residues 164 to 183 traverse the membrane as a helical segment; sequence AVAAIWVASVLFSMLFIAYY. At 184-191 the chain is on the extracellular side; that stretch reads DHAAVLLC. A helical membrane pass occupies residues 192–211; the sequence is LVVFFLAMLVLMAVLYVHML. At 212–240 the chain is on the cytoplasmic side; that stretch reads ARACQHAQGIARLHKRQRPAHQGFGLKGA. The chain crosses the membrane as a helical span at residues 241-266; it reads ATLTILLGIFFLCWGPFFLHLTLIVL. Residues 267–279 lie on the Extracellular side of the membrane; the sequence is CPQHPTCSCIFKN. A helical membrane pass occupies residues 280–300; it reads FNLFLALIICNAIIDPLIYAF. At 301–317 the chain is on the cytoplasmic side; that stretch reads RSQELRRTLKEVLLCSW. A lipid anchor (S-palmitoyl cysteine) is attached at C315.

It belongs to the G-protein coupled receptor 1 family. Interacts with MGRN1, but does not undergo MGRN1-mediated ubiquitination; this interaction competes with GNAS-binding and thus inhibits agonist-induced cAMP production. Interacts with OPN3; the interaction results in a decrease in MC1R-mediated cAMP signaling and ultimately a decrease in melanin production in melanocytes.

The protein localises to the cell membrane. Functionally, receptor for MSH (alpha, beta and gamma) and ACTH. The activity of this receptor is mediated by G proteins which activate adenylate cyclase. Mediates melanogenesis, the production of eumelanin (black/brown) and phaeomelanin (red/yellow), via regulation of cAMP signaling in melanocytes. The protein is Melanocyte-stimulating hormone receptor (MC1R) of Allenopithecus nigroviridis (Allen's swamp monkey).